A 371-amino-acid chain; its full sequence is Alanine dehydrogenase (371 aa).

Residues Arg-15 and Lys-75 each contribute to the substrate site. His-96 (proton donor/acceptor) is an active-site residue. NAD(+) is bound by residues Ser-134, 178–179 (TA), Asp-198, Ser-220, 239–240 (VL), 267–270 (IAID), Arg-279, and 298–301 (VANM). The active-site Proton donor/acceptor is the Asp-270.

This sequence belongs to the AlaDH/PNT family. As to quaternary structure, homohexamer. Trimer of dimers.

The protein resides in the cytoplasm. The catalysed reaction is L-alanine + NAD(+) + H2O = pyruvate + NH4(+) + NADH + H(+). It participates in amino-acid degradation; L-alanine degradation via dehydrogenase pathway; NH(3) and pyruvate from L-alanine: step 1/1. Its function is as follows. Catalyzes the reversible reductive amination of pyruvate to L-alanine. Required for proficient utilization of D- or L-alanine as a nitrogen source. May be required for the adaptation from aerobic growth to anaerobic dormancy. It could be involved in the maintenance of the NAD pool during the shift to an anaerobic dormant state in which oxygen as a terminal electron acceptor becomes limiting. This is Alanine dehydrogenase from Mycolicibacterium smegmatis (strain ATCC 700084 / mc(2)155) (Mycobacterium smegmatis).